Reading from the N-terminus, the 388-residue chain is Formate-dependent phosphoribosylglycinamide formyltransferase (388 aa).

N(1)-(5-phospho-beta-D-ribosyl)glycinamide is bound by residues 20–21 (EL) and glutamate 80. ATP-binding positions include arginine 112, lysine 153, 158–163 (SSGKGQ), 193–196 (EEFI), and glutamate 201. In terms of domain architecture, ATP-grasp spans 117-306 (RLAFEKLGLR…EFEIHARAIL (190 aa)). Mg(2+) contacts are provided by glutamate 265 and glutamate 277. N(1)-(5-phospho-beta-D-ribosyl)glycinamide contacts are provided by residues aspartate 284, lysine 352, and 359–360 (RR).

This sequence belongs to the PurK/PurT family. As to quaternary structure, homodimer.

The catalysed reaction is N(1)-(5-phospho-beta-D-ribosyl)glycinamide + formate + ATP = N(2)-formyl-N(1)-(5-phospho-beta-D-ribosyl)glycinamide + ADP + phosphate + H(+). It functions in the pathway purine metabolism; IMP biosynthesis via de novo pathway; N(2)-formyl-N(1)-(5-phospho-D-ribosyl)glycinamide from N(1)-(5-phospho-D-ribosyl)glycinamide (formate route): step 1/1. In terms of biological role, involved in the de novo purine biosynthesis. Catalyzes the transfer of formate to 5-phospho-ribosyl-glycinamide (GAR), producing 5-phospho-ribosyl-N-formylglycinamide (FGAR). Formate is provided by PurU via hydrolysis of 10-formyl-tetrahydrofolate. In Methanococcus maripaludis (strain C7 / ATCC BAA-1331), this protein is Formate-dependent phosphoribosylglycinamide formyltransferase.